Here is a 209-residue protein sequence, read N- to C-terminus: Uracil phosphoribosyltransferase (209 aa).

5-phospho-alpha-D-ribose 1-diphosphate is bound by residues R79, R104, and 131–139 (DPMLATGGS). Uracil-binding positions include I194 and 199–201 (GDA). D200 is a binding site for 5-phospho-alpha-D-ribose 1-diphosphate.

This sequence belongs to the UPRTase family. Mg(2+) serves as cofactor.

It catalyses the reaction UMP + diphosphate = 5-phospho-alpha-D-ribose 1-diphosphate + uracil. Its pathway is pyrimidine metabolism; UMP biosynthesis via salvage pathway; UMP from uracil: step 1/1. Its activity is regulated as follows. Allosterically activated by GTP. In terms of biological role, catalyzes the conversion of uracil and 5-phospho-alpha-D-ribose 1-diphosphate (PRPP) to UMP and diphosphate. This chain is Uracil phosphoribosyltransferase, found in Geobacter sp. (strain M21).